The chain runs to 126 residues: Protein ApaG (126 aa).

The ApaG domain maps to 2-126 (SDSRYKVDVS…FRLAVPGSLH (125 aa)).

The protein is Protein ApaG of Pseudomonas syringae pv. tomato (strain ATCC BAA-871 / DC3000).